The following is a 1502-amino-acid chain: DNA-directed RNA polymerase subunit beta' (1502 aa).

Zn(2+) contacts are provided by cysteine 60, cysteine 62, cysteine 75, and cysteine 78. Residues 265 to 293 (RKQRDLEDAEQLTGAERERKEYEASQERE) are disordered. Residues 279 to 293 (AERERKEYEASQERE) are compositionally biased toward basic and acidic residues. Mg(2+) is bound by residues aspartate 626, aspartate 628, and aspartate 630. The Zn(2+) site is built by cysteine 1002, cysteine 1075, cysteine 1082, and cysteine 1085. Residues 1472–1502 (SDDNGDEVGKNGEFADETPFTGDSDDRDNEI) are disordered.

Belongs to the RNA polymerase beta' chain family. In terms of assembly, the RNAP catalytic core consists of 2 alpha, 1 beta, 1 beta' and 1 omega subunit. When a sigma factor is associated with the core the holoenzyme is formed, which can initiate transcription. Mg(2+) is required as a cofactor. Requires Zn(2+) as cofactor.

It carries out the reaction RNA(n) + a ribonucleoside 5'-triphosphate = RNA(n+1) + diphosphate. Functionally, DNA-dependent RNA polymerase catalyzes the transcription of DNA into RNA using the four ribonucleoside triphosphates as substrates. In Roseiflexus castenholzii (strain DSM 13941 / HLO8), this protein is DNA-directed RNA polymerase subunit beta'.